The chain runs to 110 residues: Small ribosomal subunit protein bS16 (110 aa).

The interval 87 to 110 (ARNNPEKAVPRKERKAAAEAAAKK) is disordered.

Belongs to the bacterial ribosomal protein bS16 family.

This chain is Small ribosomal subunit protein bS16, found in Rhodopseudomonas palustris (strain BisA53).